Consider the following 785-residue polypeptide: Protein SEY1 (785 aa).

The Cytoplasmic portion of the chain corresponds to 1-690 (MTDLEVSAIQ…KRSVINSKTE (690 aa)). Residues 40–266 (GLNYHIVSVF…SEDQLFNEGY (227 aa)) enclose the GB1/RHD3-type G domain. 50–57 (GSQSTGKS) lines the GTP pocket. Residues 451–479 (PKLRELEEELSNLRTELVNKEQENIKTKI) are a coiled coil. The chain crosses the membrane as a helical span at residues 691 to 711 (VPLYIYALLLVLGWNEFMIIL). Topologically, residues 712-714 (RNP) are lumenal. A helical transmembrane segment spans residues 715-735 (LLITLLLIGLTGLYLGYKTKL). Residues 736–785 (LGPIVQVVQAMIQELQDQAKNKLRDVLVSEPEAPSQVRIGKEVDATKDED) are Cytoplasmic-facing.

This sequence belongs to the TRAFAC class dynamin-like GTPase superfamily. GB1/RHD3 GTPase family. RHD3 subfamily.

The protein resides in the endoplasmic reticulum membrane. In terms of biological role, cooperates with the reticulon proteins and tubule-shaping DP1 family proteins to generate and maintain the structure of the tubular endoplasmic reticulum network. Has GTPase activity, which is required for its function in ER organization. The sequence is that of Protein SEY1 from Komagataella phaffii (strain GS115 / ATCC 20864) (Yeast).